The primary structure comprises 155 residues: Small ribosomal subunit protein uS7c (155 aa).

It belongs to the universal ribosomal protein uS7 family. Part of the 30S ribosomal subunit.

The protein resides in the plastid. Its subcellular location is the chloroplast. In terms of biological role, one of the primary rRNA binding proteins, it binds directly to 16S rRNA where it nucleates assembly of the head domain of the 30S subunit. In Euonymus alatus (Burning bush), this protein is Small ribosomal subunit protein uS7c (rps7).